A 160-amino-acid polypeptide reads, in one-letter code: Phosphopantetheine adenylyltransferase (160 aa).

A substrate-binding site is contributed by Thr11. Residues 11–12 (TF) and His19 each bind ATP. Substrate is bound by residues Lys43, Thr75, and Arg89. ATP contacts are provided by residues 90–92 (GLR), Glu100, and 125–131 (YSFLSSS).

It belongs to the bacterial CoaD family. In terms of assembly, homohexamer. The cofactor is Mg(2+).

The protein resides in the cytoplasm. The catalysed reaction is (R)-4'-phosphopantetheine + ATP + H(+) = 3'-dephospho-CoA + diphosphate. It participates in cofactor biosynthesis; coenzyme A biosynthesis; CoA from (R)-pantothenate: step 4/5. Functionally, reversibly transfers an adenylyl group from ATP to 4'-phosphopantetheine, yielding dephospho-CoA (dPCoA) and pyrophosphate. In Listeria monocytogenes serotype 4b (strain CLIP80459), this protein is Phosphopantetheine adenylyltransferase.